The primary structure comprises 94 residues: Large ribosomal subunit protein uL23c (94 aa).

It belongs to the universal ribosomal protein uL23 family. Part of the 50S ribosomal subunit.

The protein resides in the plastid. Its subcellular location is the chloroplast. Binds to 23S rRNA. The protein is Large ribosomal subunit protein uL23c (rpl23) of Tupiella akineta (Green alga).